We begin with the raw amino-acid sequence, 457 residues long: Mesentericin Y105 secretion protein MesE (457 aa).

A helical transmembrane segment spans residues Thr22 to Ala42.

The protein belongs to the membrane fusion protein (MFP) (TC 8.A.1) family.

Its subcellular location is the membrane. Involved in the secretion of mesentericin Y105. This Leuconostoc mesenteroides protein is Mesentericin Y105 secretion protein MesE (mesE).